We begin with the raw amino-acid sequence, 264 residues long: Apolipoprotein A-I (264 aa).

The first 18 residues, 1 to 18 (MRGVLVTLAVLFLTGTQA), serve as a signal peptide directing secretion. Repeat copies occupy residues 67-88 (LKLA…EDMA) and 89-110 (PYYK…AELT). The tract at residues 67 to 264 (LKLADNLDTL…FLDELQKSVA (198 aa)) is 10 X approximate tandem repeats. Residues 111-121 (KDLEEVKEKIR) form a 3; half-length repeat. A run of 5 repeats spans residues 122–143 (PFLD…QRLT), 144–165 (PVAQ…AKLT), 166–187 (PVAE…KNLA), 188–209 (PYSD…EKGI), and 210–231 (PQAS…EKMT). Residues 232 to 242 (PLVQEFRERLT) form a 9; half-length repeat. Repeat 10 spans residues 243–264 (PYAENLKNRLISFLDELQKSVA).

This sequence belongs to the apolipoprotein A1/A4/E family. As to quaternary structure, homodimer. Major protein of plasma HDL, also found in chylomicrons.

Its subcellular location is the secreted. In terms of biological role, participates in the reverse transport of cholesterol from tissues to the liver for excretion by promoting cholesterol efflux from tissues and by acting as a cofactor for the lecithin cholesterol acyltransferase (LCAT). The chain is Apolipoprotein A-I (APOA1) from Gallus gallus (Chicken).